A 113-amino-acid chain; its full sequence is Urease subunit beta (113 aa).

The protein belongs to the urease beta subunit family. In terms of assembly, heterotrimer of UreA (gamma), UreB (beta) and UreC (alpha) subunits. Three heterotrimers associate to form the active enzyme.

The protein localises to the cytoplasm. It carries out the reaction urea + 2 H2O + H(+) = hydrogencarbonate + 2 NH4(+). It functions in the pathway nitrogen metabolism; urea degradation; CO(2) and NH(3) from urea (urease route): step 1/1. This chain is Urease subunit beta, found in Cyanothece sp. (strain PCC 7425 / ATCC 29141).